An 827-amino-acid polypeptide reads, in one-letter code: SH3-containing GRB2-like protein 3-interacting protein 1 (827 aa).

3 disordered regions span residues 1–115 (MMEG…ESHK), 142–205 (SIGN…GPPL), and 223–278 (IWGS…QAAT). Basic and acidic residues-rich tracts occupy residues 16 to 32 (RKKE…DRDG) and 40 to 54 (PPYH…EGGK). Phosphoserine occurs at positions 78, 104, 105, 107, 149, 151, 156, and 169. A phosphothreonine mark is found at Thr180 and Thr182. A Phosphoserine modification is found at Ser236. Pro residues predominate over residues 245 to 260 (TGTPPPLPPKAVPATP). 2 positions are modified to phosphothreonine: Thr247 and Thr259. Ser265, Ser287, Ser289, Ser300, Ser316, and Ser319 each carry phosphoserine. Polar residues predominate over residues 265–276 (SPLTVATGNDQA). Residues 314–333 (HFSDASPEHVTPELTPREKV) are compositionally biased toward basic and acidic residues. Positions 314–523 (HFSDASPEHV…LSAATTPTVE (210 aa)) are disordered. Residues Thr324, Thr328, and Thr335 each carry the phosphothreonine modification. Low complexity predominate over residues 336–345 (PPAASDIPAD). Residues 346–369 (SPAPGPPGPPGSAGPPGPPGPRHV) show a composition bias toward pro residues. Ser371 carries the phosphoserine modification. Basic and acidic residues predominate over residues 377-392 (EVQKKVAEQTFIKDDY). Position 398 is a phosphoserine (Ser398). Thr409 is subject to Phosphothreonine. Low complexity predominate over residues 436 to 455 (ASGASSPARPATPLVPCSST). The span at 456 to 474 (TPPPPPPRPPSRPKLPPGK) shows a compositional bias: pro residues. 2 stretches are compositionally biased toward low complexity: residues 481–491 (SRPFSPPIHSS) and 498–521 (PLAR…TTPT). Ser485 carries the phosphoserine modification. The 269-residue stretch at 558–826 (TLPVAAAFTE…RFAAGKYLAD (269 aa)) folds into the MHD domain. Interaction with DPF motifs-containing proteins regions lie at residues 560–566 (PVAAAFT), 592–594 (SFP), 666–669 (TYYN), and 812–817 (SLIKKR). The necessary and sufficient to mediate interaction with CANX stretch occupies residues 648–827 (MPNLMTHLKK…FAAGKYLADN (180 aa)).

Interacts with proteins essential or regulating the formation of functional clathrin-coated pits. Interacts with CANX. Interacts with AP2A1. Interacts with EPS15. Interacts with SH3GL3. Interacts with AMPH. Interacts with ITSN1 (via SH3 domains). Interacts with and REPS1. As to expression, specifically expressed in brain (at protein level).

The protein localises to the membrane. Its subcellular location is the clathrin-coated pit. In terms of biological role, may function in clathrin-mediated endocytosis. Has both a membrane binding/tubulating activity and the ability to recruit proteins essential to the formation of functional clathrin-coated pits. Has a preference for membranes enriched in phosphatidylserine and phosphoinositides and is required for the endocytosis of the transferrin receptor. May also bind tubulin. May play a role in the regulation of energy homeostasis. The protein is SH3-containing GRB2-like protein 3-interacting protein 1 (Sgip1) of Rattus norvegicus (Rat).